We begin with the raw amino-acid sequence, 89 residues long: Tuberculin-active protein (89 aa).

A disulfide bridge links Cys-27 with Cys-59. The interval 61-89 (DGGSESEGKNGSQMRLIADVGPESATVAK) is disordered.

Tuberculin is the soluble, proteinaceous cell substance of the bacterium, to which infected animals become hypersensitive and react characteristically to dermal injections. This Mycobacterium tuberculosis protein is Tuberculin-active protein.